Consider the following 98-residue polypeptide: Acylphosphatase (98 aa).

The region spanning 12–98 is the Acylphosphatase-like domain; it reads TYYVRVRGVV…ERRFERFQQQ (87 aa). Active-site residues include Arg-27 and Asn-45.

Belongs to the acylphosphatase family.

It carries out the reaction an acyl phosphate + H2O = a carboxylate + phosphate + H(+). The chain is Acylphosphatase (acyP) from Burkholderia vietnamiensis (strain G4 / LMG 22486) (Burkholderia cepacia (strain R1808)).